A 101-amino-acid polypeptide reads, in one-letter code: ATP synthase subunit c (101 aa).

The next 2 helical transmembrane spans lie at 28 to 48 (SVVA…VGMG) and 72 to 92 (MFIA…IALI).

This sequence belongs to the ATPase C chain family. F-type ATPases have 2 components, F(1) - the catalytic core - and F(0) - the membrane proton channel. F(1) has five subunits: alpha(3), beta(3), gamma(1), delta(1), epsilon(1). F(0) has three main subunits: a(1), b(2) and c(10-14). The alpha and beta chains form an alternating ring which encloses part of the gamma chain. F(1) is attached to F(0) by a central stalk formed by the gamma and epsilon chains, while a peripheral stalk is formed by the delta and b chains.

The protein resides in the cell inner membrane. In terms of biological role, f(1)F(0) ATP synthase produces ATP from ADP in the presence of a proton or sodium gradient. F-type ATPases consist of two structural domains, F(1) containing the extramembraneous catalytic core and F(0) containing the membrane proton channel, linked together by a central stalk and a peripheral stalk. During catalysis, ATP synthesis in the catalytic domain of F(1) is coupled via a rotary mechanism of the central stalk subunits to proton translocation. Key component of the F(0) channel; it plays a direct role in translocation across the membrane. A homomeric c-ring of between 10-14 subunits forms the central stalk rotor element with the F(1) delta and epsilon subunits. The polypeptide is ATP synthase subunit c (Sulfurovum sp. (strain NBC37-1)).